A 364-amino-acid polypeptide reads, in one-letter code: Oxidized low-density lipoprotein receptor 1 (364 aa).

The disordered stretch occupies residues 1–21 (MAFDDKMKPVNGQPDQKSCGK). Residues 1–31 (MAFDDKMKPVNGQPDQKSCGKKPKGLHLLSS) lie on the Cytoplasmic side of the membrane. Residues 32 to 54 (TWWCPAAVTLAILCLVLSVTLIV) traverse the membrane as a helical; Signal-anchor for type II membrane protein segment. 2 S-palmitoyl cysteine lipidation sites follow: Cys35 and Cys45. Residues 55–242 (QQTQLLQVSD…GPCPQDWIWH (188 aa)) are neck. At 55-364 (QQTQLLQVSD…QKKANLLLTQ (310 aa)) the chain is on the extracellular side. N-linked (GlcNAc...) asparagine glycans are attached at residues Asn72, Asn92, and Asn138. Positions 83-233 (QMSAQKKAEN…ALQRAANSSG (151 aa)) form a coiled coil. Repeat copies occupy residues 96 to 141 (ESKR…NASE), 142 to 187 (ESKW…KYSE), and 188 to 233 (ESQR…NSSG). Intrachain disulfides connect Cys235–Cys246, Cys262–Cys354, and Cys333–Cys346. A C-type lectin domain is found at 242 to 355 (HKENCYLFHG…CILTAFSICQ (114 aa)).

In terms of assembly, homodimer; disulfide-linked. May form a hexamer composed of 3 homodimers. Interacts with HSP70. Post-translationally, N-glycosylated. Predominantly expressed in lung and at lower level in kidney. Expressed in macrophages but not in vascular smooth muscle cells.

It localises to the cell membrane. The protein localises to the membrane raft. The protein resides in the secreted. Its function is as follows. Receptor that mediates the recognition, internalization and degradation of oxidatively modified low density lipoprotein (oxLDL) by vascular endothelial cells. OxLDL is a marker of atherosclerosis that induces vascular endothelial cell activation and dysfunction, resulting in pro-inflammatory responses, pro-oxidative conditions and apoptosis. Its association with oxLDL induces the activation of NF-kappa-B through an increased production of intracellular reactive oxygen and a variety of pro-atherogenic cellular responses including a reduction of nitric oxide (NO) release, monocyte adhesion and apoptosis. In addition to binding oxLDL, it acts as a receptor for the HSP70 protein involved in antigen cross-presentation to naive T-cells in dendritic cells, thereby participating in cell-mediated antigen cross-presentation. Also involved in inflammatory process, by acting as a leukocyte-adhesion molecule at the vascular interface in endotoxin-induced inflammation. Also acts as a receptor for advanced glycation end (AGE) products, activated platelets, monocytes, apoptotic cells and both Gram-negative and Gram-positive bacteria. The protein is Oxidized low-density lipoprotein receptor 1 (Olr1) of Rattus norvegicus (Rat).